A 359-amino-acid polypeptide reads, in one-letter code: N-acetyl-gamma-glutamyl-phosphate reductase (359 aa).

Residue Cys-162 is part of the active site.

The protein belongs to the NAGSA dehydrogenase family. Type 1 subfamily.

It localises to the cytoplasm. It carries out the reaction N-acetyl-L-glutamate 5-semialdehyde + phosphate + NADP(+) = N-acetyl-L-glutamyl 5-phosphate + NADPH + H(+). It participates in amino-acid biosynthesis; L-arginine biosynthesis; N(2)-acetyl-L-ornithine from L-glutamate: step 3/4. Functionally, catalyzes the NADPH-dependent reduction of N-acetyl-5-glutamyl phosphate to yield N-acetyl-L-glutamate 5-semialdehyde. The polypeptide is N-acetyl-gamma-glutamyl-phosphate reductase (Prochlorococcus marinus (strain NATL1A)).